A 511-amino-acid polypeptide reads, in one-letter code: ATP synthase subunit alpha (511 aa).

170–177 (GDRQTGKT) serves as a coordination point for ATP.

This sequence belongs to the ATPase alpha/beta chains family. As to quaternary structure, F-type ATPases have 2 components, CF(1) - the catalytic core - and CF(0) - the membrane proton channel. CF(1) has five subunits: alpha(3), beta(3), gamma(1), delta(1), epsilon(1). CF(0) has three main subunits: a(1), b(2) and c(9-12). The alpha and beta chains form an alternating ring which encloses part of the gamma chain. CF(1) is attached to CF(0) by a central stalk formed by the gamma and epsilon chains, while a peripheral stalk is formed by the delta and b chains.

Its subcellular location is the cell inner membrane. The enzyme catalyses ATP + H2O + 4 H(+)(in) = ADP + phosphate + 5 H(+)(out). Functionally, produces ATP from ADP in the presence of a proton gradient across the membrane. The alpha chain is a regulatory subunit. The sequence is that of ATP synthase subunit alpha from Pelagibacter ubique (strain HTCC1062).